A 467-amino-acid chain; its full sequence is Retinoic acid receptor RXR-alpha (467 aa).

A disordered region spans residues 1–112; the sequence is MDTKHFLPLD…MNPVSSTEDI (112 aa). The tract at residues 1-139 is modulating domain; the sequence is MDTKHFLPLD…GNMASFTKHI (139 aa). A Glycyl lysine isopeptide (Lys-Gly) (interchain with G-Cter in SUMO2) cross-link involves residue lysine 4. The segment covering 11–25 has biased composition (polar residues); the sequence is FSTQVNSSSLNSPTG. 2 positions are modified to phosphoserine: serine 22 and serine 28. Positions 32 to 52 are enriched in low complexity; it reads PSLHPSLGPGIGSPLGSPGQL. The segment covering 54–63 has biased composition (polar residues); that stretch reads SPISTLSSPI. Phosphoserine; by MAPK8 and MAPK9 occurs at positions 61 and 75. The span at 83-109 shows a compositional bias: polar residues; sequence SVPTTPTLGFGTGSPQLNSPMNPVSST. Residue threonine 87 is modified to Phosphothreonine; by MAPK8 and MAPK9. Residue lysine 113 forms a Glycyl lysine isopeptide (Lys-Gly) (interchain with G-Cter in SUMO) linkage. Residue serine 134 is modified to Phosphoserine. The Zn(2+) site is built by cysteine 140 and cysteine 143. An NR C4-type zinc finger spans residues 140-160; that stretch reads CAICGDRSSGKHYGVYSCEGC. A DNA-binding region (nuclear receptor) is located at residues 140 to 205; it reads CAICGDRSSG…RYQKCLAMGM (66 aa). Lysine 150 is subject to N6-acetyllysine. Zn(2+) is bound by residues cysteine 157 and cysteine 160. The tract at residues 165–170 is nuclear localization signal; it reads KRTVRK. Positions 176, 182, 192, and 195 each coordinate Zn(2+). The segment at 176 to 200 adopts an NR C4-type zinc-finger fold; it reads CRDNKDCLIDKRQRNRCQYCRYQKC. The hinge stretch occupies residues 206-229; that stretch reads KREAVQEERQRGKDRNENEVESTS. Residues 211–223 are compositionally biased toward basic and acidic residues; the sequence is QEERQRGKDRNEN. The segment at 211 to 233 is disordered; it reads QEERQRGKDRNENEVESTSSANE. One can recognise an NR LBD domain in the interval 232–463; it reads NEDMPVEKIL…TFLMEMLEAP (232 aa). Serine 264 is modified (phosphoserine). Serine 265 carries the phosphoserine; by MAPK8 and MAPK9 modification. 9-cis-retinoate-binding residues include arginine 321 and alanine 332. Residues arginine 321 and alanine 332 each coordinate all-trans-retinoate. The interval 353–373 is required for nuclear export; the sequence is RVLTELVSKMRDMQMDKTELG.

The protein belongs to the nuclear hormone receptor family. NR2 subfamily. Homodimer. Heterodimer with RARA; required for ligand-dependent retinoic acid receptor transcriptional activity. Heterodimer with PPARA (via the leucine-like zipper in the LBD); the interaction is required for PPARA transcriptional activity. Heterodimerizes with PPARG. Heterodimerizes (via NR LBD) with RARB. Heterodimerizes with NR1H4; the heterodimerization enhances the binding affinity for LXXLL motifs from coactivators. Interacts with coactivator NCO6. Interacts with coactivator NCO3. Interacts with coactivator FAM120B. Interacts with coactivator PELP1, SENP6, SFPQ, DNTTIP2 and RNF8. Interacts with PRMT2. Interacts with ASXL1. Interacts with BHLHE40/DEC1, BHLHE41/DEC2, NCOR1 and NCOR2. Interacts in a ligand-dependent fashion with MED1 and NCOA1. Interacts with VDR. Interacts with EP300; the interaction is decreased by 9-cis retinoic acid. Heterodimer (via C-terminus) with NR4A1 (via DNA-binding domain); the interaction is enhanced by 9-cis retinoic acid. NR4A1 competes with EP300 for interaction with RXRA and thereby attenuates EP300 mediated acetylation of RXRA. In the absence of hormonal ligand, interacts with TACC1. Interacts ith IGFBP3. Post-translationally, acetylated by EP300; acetylation enhances DNA binding and transcriptional activity. In terms of processing, phosphorylated on serine and threonine residues mainly in the N-terminal modulating domain. Constitutively phosphorylated on Ser-22 in the presence or absence of ligand. Under stress conditions, hyperphosphorylated by activated JNK on Ser-61, Ser-75, Thr-87 and Ser-265. Phosphorylated on Ser-28, in vitro, by PKA. This phosphorylation is required for repression of cAMP-mediated transcriptional activity of RARA. Ubiquitinated by UBR5, leading to its degradation: UBR5 specifically recognizes and binds ligand-bound RXRA when it is not associated with coactivators (NCOAs). In presence of NCOAs, the UBR5-degron is not accessible, preventing its ubiquitination and degradation. Post-translationally, sumoylation negatively regulates transcriptional activity. Desumoylated specifically by SENP6. Expressed in macrophages (at protein level).

The protein localises to the nucleus. The protein resides in the cytoplasm. It localises to the mitochondrion. Functionally, receptor for retinoic acid that acts as a transcription factor. Forms homo- or heterodimers with retinoic acid receptors (RARs) and binds to target response elements in response to their ligands, all-trans or 9-cis retinoic acid, to regulate gene expression in various biological processes. The RAR/RXR heterodimers bind to the retinoic acid response elements (RARE) composed of tandem 5'-AGGTCA-3' sites known as DR1-DR5 to regulate transcription. The high affinity ligand for retinoid X receptors (RXRs) is 9-cis retinoic acid. In the absence of ligand, the RXR-RAR heterodimers associate with a multiprotein complex containing transcription corepressors that induce histone deacetylation, chromatin condensation and transcriptional suppression. On ligand binding, the corepressors dissociate from the receptors and coactivators are recruited leading to transcriptional activation. Serves as a common heterodimeric partner for a number of nuclear receptors, such as RARA, RARB and PPARA. The RXRA/RARB heterodimer can act as a transcriptional repressor or transcriptional activator, depending on the RARE DNA element context. The RXRA/PPARA heterodimer is required for PPARA transcriptional activity on fatty acid oxidation genes such as ACOX1 and the P450 system genes. Together with RARA, positively regulates microRNA-10a expression, thereby inhibiting the GATA6/VCAM1 signaling response to pulsatile shear stress in vascular endothelial cells. Acts as an enhancer of RARA binding to RARE DNA element. May facilitate the nuclear import of heterodimerization partners such as VDR and NR4A1. Promotes myelin debris phagocytosis and remyelination by macrophages. Plays a role in the attenuation of the innate immune system in response to viral infections, possibly by negatively regulating the transcription of antiviral genes such as type I IFN genes. Involved in the regulation of calcium signaling by repressing ITPR2 gene expression, thereby controlling cellular senescence. The sequence is that of Retinoic acid receptor RXR-alpha (Rxra) from Mus musculus (Mouse).